Consider the following 115-residue polypeptide: Aspartate 1-decarboxylase (115 aa).

Serine 25 functions as the Schiff-base intermediate with substrate; via pyruvic acid in the catalytic mechanism. Position 25 is a pyruvic acid (Ser) (serine 25). A substrate-binding site is contributed by threonine 57. The active-site Proton donor is tyrosine 58. 73 to 75 (GAA) contacts substrate.

The protein belongs to the PanD family. As to quaternary structure, heterooctamer of four alpha and four beta subunits. Requires pyruvate as cofactor. In terms of processing, is synthesized initially as an inactive proenzyme, which is activated by self-cleavage at a specific serine bond to produce a beta-subunit with a hydroxyl group at its C-terminus and an alpha-subunit with a pyruvoyl group at its N-terminus.

The protein resides in the cytoplasm. It carries out the reaction L-aspartate + H(+) = beta-alanine + CO2. It functions in the pathway cofactor biosynthesis; (R)-pantothenate biosynthesis; beta-alanine from L-aspartate: step 1/1. Catalyzes the pyruvoyl-dependent decarboxylation of aspartate to produce beta-alanine. This is Aspartate 1-decarboxylase from Kosmotoga olearia (strain ATCC BAA-1733 / DSM 21960 / TBF 19.5.1).